Consider the following 530-residue polypeptide: Per os infectivity factor 1 (530 aa).

Residues 1–15 (MHFAIILLFLLVIIA) form the signal peptide.

Forms the PIF complex together with PIF2 and PIF3. The complex also interacts with per os infectivity factor PIF0.

The protein localises to the virion membrane. In terms of biological role, per os infectivity factor that mediates the specific binding of occluded virions (ODV) to the host midgut target cells. The polypeptide is Per os infectivity factor 1 (Autographa californica nuclear polyhedrosis virus (AcMNPV)).